The following is a 509-amino-acid chain: Maturase K (509 aa).

This sequence belongs to the intron maturase 2 family. MatK subfamily.

The protein resides in the plastid. The protein localises to the chloroplast. Its function is as follows. Usually encoded in the trnK tRNA gene intron. Probably assists in splicing its own and other chloroplast group II introns. The polypeptide is Maturase K (Anthocercis viscosa (Sticky tailflower)).